The primary structure comprises 197 residues: uncharacterized protein (197 aa).

One can recognise a PfpI endopeptidase domain in the interval 29 to 166; the sequence is DWSVHTVSLD…FTNLILEMID (138 aa). The active-site Nucleophile is the Cys98.

The protein belongs to the peptidase C56 family.

This is an uncharacterized protein from Bacillus subtilis (strain 168).